The chain runs to 101 residues: Small ribosomal subunit protein uS14 (101 aa).

Belongs to the universal ribosomal protein uS14 family. Part of the 30S ribosomal subunit. Contacts proteins S3 and S10.

In terms of biological role, binds 16S rRNA, required for the assembly of 30S particles and may also be responsible for determining the conformation of the 16S rRNA at the A site. This is Small ribosomal subunit protein uS14 from Novosphingobium aromaticivorans (strain ATCC 700278 / DSM 12444 / CCUG 56034 / CIP 105152 / NBRC 16084 / F199).